A 153-amino-acid chain; its full sequence is MNVGTAHSEVNPNTRVMNSRGIWLSYVLAIGLLHVVLLSIPFVSVPVVWTLTNLIHNLGMYIFLHTVKGTPFETPDQGKARLLTHWEQMDYGVQFTASRKFLTITPIVLYFLTSFYTKYDQVHFILNTVSLMSVLIPKLPQLHGVRIFGINKY.

The segment at 1–17 (MNVGTAHSEVNPNTRVM) is important for ceramide level-sensing. At 1-21 (MNVGTAHSEVNPNTRVMNSRG) the chain is on the cytoplasmic side. 2 helical membrane passes run 22–42 (IWLS…SIPF) and 43–63 (VSVP…MYIF). Topologically, residues 64 to 94 (LHTVKGTPFETPDQGKARLLTHWEQMDYGVQ) are cytoplasmic. The chain crosses the membrane as a helical span at residues 95–117 (FTASRKFLTITPIVLYFLTSFYT). Residues 118–121 (KYDQ) are Extracellular-facing. A helical membrane pass occupies residues 122–142 (VHFILNTVSLMSVLIPKLPQL). Residue P137 is modified to Hydroxyproline. Residues 143–153 (HGVRIFGINKY) lie on the Cytoplasmic side of the membrane.

Belongs to the ORM family. In terms of assembly, ceramide-sensitive subunit of the serine palmitoyltransferase (SPT) complex, which is also composed of SPTLC1, SPTLC2/3 and SPTSSA/B. Post-translationally, when hydroxylated at Pro-137, ubiquitinated via 'Lys-48'-linkage, leading to proteasomal degradation. In endothelial cells, ORMDL3 proteasomal degradation is controlled by the sphingosine 1-phosphate receptor signaling pathway.

The protein localises to the endoplasmic reticulum membrane. Its function is as follows. Plays an essential role in the homeostatic regulation of sphingolipid de novo biosynthesis by modulating the activity of the serine palmitoyltransferase (SPT) in response to ceramide levels. When complexed to SPT, the binding of ceramides to its N-terminus stabilizes a conformation that block SPT substrate entry, hence preventing SPT catalytic activity. Through this mechanism, maintains ceramide levels at sufficient concentrations for the production of complex sphingolipids, but which prevents the accumulation of ceramides to levels that trigger apoptosis. In Rattus norvegicus (Rat), this protein is ORM1-like protein 3 (Ormdl3).